The chain runs to 330 residues: Phospho-N-acetylmuramoyl-pentapeptide-transferase (330 aa).

9 helical membrane passes run 13 to 33, 58 to 78, 83 to 103, 113 to 133, 152 to 172, 179 to 199, 209 to 229, 231 to 250, and 304 to 324; these read VFVF…LIPM, PTMG…FYAG, ILPL…DDFI, LYWN…AVYL, VSLG…STNA, LDGL…IVAM, MFSA…AYPA, IFMG…AIAI, and VKVV…GFFA.

It belongs to the glycosyltransferase 4 family. MraY subfamily. It depends on Mg(2+) as a cofactor.

The protein resides in the cell membrane. The enzyme catalyses UDP-N-acetyl-alpha-D-muramoyl-L-alanyl-gamma-D-glutamyl-meso-2,6-diaminopimeloyl-D-alanyl-D-alanine + di-trans,octa-cis-undecaprenyl phosphate = di-trans,octa-cis-undecaprenyl diphospho-N-acetyl-alpha-D-muramoyl-L-alanyl-D-glutamyl-meso-2,6-diaminopimeloyl-D-alanyl-D-alanine + UMP. The protein operates within cell wall biogenesis; peptidoglycan biosynthesis. In terms of biological role, catalyzes the initial step of the lipid cycle reactions in the biosynthesis of the cell wall peptidoglycan: transfers peptidoglycan precursor phospho-MurNAc-pentapeptide from UDP-MurNAc-pentapeptide onto the lipid carrier undecaprenyl phosphate, yielding undecaprenyl-pyrophosphoryl-MurNAc-pentapeptide, known as lipid I. This is Phospho-N-acetylmuramoyl-pentapeptide-transferase from Acetivibrio thermocellus (strain ATCC 27405 / DSM 1237 / JCM 9322 / NBRC 103400 / NCIMB 10682 / NRRL B-4536 / VPI 7372) (Clostridium thermocellum).